The chain runs to 575 residues: Sodium/calcium exchanger NCL2 (575 aa).

The next 3 helical transmembrane spans lie at 69–89, 112–132, and 146–166; these read FLPCTTTAWGNLFLVLAYGFL, IVGGLFLPILGALPDALLILV, and VLIGMGLLAGSTVMLLTLLWG. N-linked (GlcNAc...) asparagine glycosylation is present at asparagine 179. Helical transmembrane passes span 210–230 and 237–257; these read IMAISILPFIIVQIPKIFKLH and VLIGLIVAALLLLSYCLYQVF. 2 EF-hand domains span residues 297–332 and 337–372; these read PNVSVIEKLFHRIDQDNDGKLERGELQAFIVGINFE and NSNLAADQVMADFDTSRNHFIEKGEFVNGMLRWLDE. Asparagine 298 is a glycosylation site (N-linked (GlcNAc...) asparagine). The Ca(2+) site is built by aspartate 310, aspartate 312, aspartate 314, lysine 316, glutamate 321, aspartate 350, serine 352, asparagine 354, and glutamate 361. Helical transmembrane passes span 417 to 437, 457 to 477, 494 to 514, 522 to 542, and 548 to 568; these read WTCIKAILLLLLGTAMAAASA, FISFIVMPLATNSSEAVSAII, VYGGVTMNNTLCLAVFLALVY, FSSEVLIILLVCIIMGLFTSF, and LWTCFVAFLLYPLSLIMVYIL.

Belongs to the Ca(2+):cation antiporter (CaCA) (TC 2.A.19) family.

The protein localises to the cell membrane. May function as a sodium/calcium exchanger (NCX) and participate in the maintenance of calcium homeostasis. May play a role abiotic stress responses. The sequence is that of Sodium/calcium exchanger NCL2 from Oryza sativa subsp. japonica (Rice).